The chain runs to 516 residues: Flagellar radial spoke protein 3 (516 aa).

Polar residues-rich tracts occupy residues 1–11 (MVQAKAQQQLY) and 62–74 (ATQT…SPAS). Disordered regions lie at residues 1-32 (MVQA…EDET), 60-90 (ADAT…TPEA), 388-412 (NAKW…AAEE), and 424-447 (AAAE…DGVE). Positions 391 to 412 (WEADKAEAAEKARAEAEAAAEE) are enriched in basic and acidic residues.

This sequence belongs to the flagellar radial spoke RSP3 family. As to quaternary structure, interacts with FAP91. Post-translationally, protein 3 is one of the 5 radial spoke proteins that are phosphorylated. Protein 3a might only differ from protein 3 in being unphosphorylated.

It is found in the cytoplasm. Its subcellular location is the cytoskeleton. It localises to the flagellum axoneme. Protein 3 may attach the radial spoke to the outer doublet microtubule or is required to form a stable spoke structure. Its function is as follows. Flagellar radial spokes contribute to the regulation of dynein arm activity and thus the pattern of flagellar bending. They consist of a thin stalk, which is attached to the a subfiber of the outer doublet microtubule, and a bulbous head, which is attached to the stalk and appears to interact with the projections from the central pair of microtubules. This chain is Flagellar radial spoke protein 3, found in Chlamydomonas reinhardtii (Chlamydomonas smithii).